Reading from the N-terminus, the 490-residue chain is Probable cytosol aminopeptidase (490 aa).

Mn(2+)-binding residues include lysine 257 and aspartate 262. The active site involves lysine 269. Mn(2+) is bound by residues aspartate 281, aspartate 341, and glutamate 343. Residue arginine 345 is part of the active site.

It belongs to the peptidase M17 family. Mn(2+) serves as cofactor.

It localises to the cytoplasm. The catalysed reaction is Release of an N-terminal amino acid, Xaa-|-Yaa-, in which Xaa is preferably Leu, but may be other amino acids including Pro although not Arg or Lys, and Yaa may be Pro. Amino acid amides and methyl esters are also readily hydrolyzed, but rates on arylamides are exceedingly low.. It carries out the reaction Release of an N-terminal amino acid, preferentially leucine, but not glutamic or aspartic acids.. In terms of biological role, presumably involved in the processing and regular turnover of intracellular proteins. Catalyzes the removal of unsubstituted N-terminal amino acids from various peptides. The sequence is that of Probable cytosol aminopeptidase from Prochlorococcus marinus (strain AS9601).